Here is a 382-residue protein sequence, read N- to C-terminus: 6-hydroxynicotinate 3-monooxygenase (382 aa).

The signal sequence occupies residues 1 to 25 (MRGRQKIAIVGAGLGGAAAATLLQQ). Residues Gly-15, 34-35 (EQ), His-47, Arg-108, and Leu-130 contribute to the FAD site. The Proton acceptor role is filled by His-47. Residue Tyr-215 is the Proton acceptor of the active site. FAD is bound by residues Asp-294 and 307 to 308 (AC).

It belongs to the 6-hydroxynicotinate 3-monooxygenase family. Monomer. It depends on FAD as a cofactor.

The enzyme catalyses 6-hydroxynicotinate + NADH + O2 + 2 H(+) = 2,5-dihydroxypyridine + CO2 + NAD(+) + H2O. Its pathway is cofactor degradation; nicotinate degradation. Its function is as follows. Flavin-dependent monooxygenase (FMO) that catalyzes the decarboxylative hydroxylation of 6-hydroxynicotinic acid (6-HNA) to 2,5-dihydroxypyridine (2,5-DHP) with concomitant oxidation of NADH, a step in the aerobic nicotinate degradation pathway. The sequence is that of 6-hydroxynicotinate 3-monooxygenase from Pseudomonas putida (strain ATCC 47054 / DSM 6125 / CFBP 8728 / NCIMB 11950 / KT2440).